The following is a 277-amino-acid chain: Putative phosphoenolpyruvate synthase regulatory protein (277 aa).

ADP is bound at residue Gly157 to Thr164.

Belongs to the pyruvate, phosphate/water dikinase regulatory protein family. PSRP subfamily.

It catalyses the reaction [pyruvate, water dikinase] + ADP = [pyruvate, water dikinase]-phosphate + AMP + H(+). The catalysed reaction is [pyruvate, water dikinase]-phosphate + phosphate + H(+) = [pyruvate, water dikinase] + diphosphate. In terms of biological role, bifunctional serine/threonine kinase and phosphorylase involved in the regulation of the phosphoenolpyruvate synthase (PEPS) by catalyzing its phosphorylation/dephosphorylation. This chain is Putative phosphoenolpyruvate synthase regulatory protein, found in Azoarcus sp. (strain BH72).